The primary structure comprises 378 residues: L-asparaginase-like protein GF11609 (378 aa).

A signal peptide spans 1-21 (MCSPLPLLILRLLLLTHPSLG). 3 cysteine pairs are disulfide-bonded: cysteine 71–cysteine 76, cysteine 170–cysteine 186, and cysteine 325–cysteine 352.

It belongs to the Ntn-hydrolase family.

This Drosophila ananassae (Fruit fly) protein is L-asparaginase-like protein GF11609.